An 85-amino-acid chain; its full sequence is Small proline-rich protein 2D (85 aa).

Residues 1 to 11 (MSYQQQQCKQP) are compositionally biased toward low complexity. Positions 1–20 (MSYQQQQCKQPCQPPPVCPP) are disordered. Repeat copies occupy residues 21–29 (KKCPEPCPP), 30–38 (LKCPEPCPP), 39–47 (PKCPEPCPP), and 48–56 (PKCPEPCPE). The 4 X 9 AA approximate tandem repeats stretch occupies residues 21 to 56 (KKCPEPCPPLKCPEPCPPPKCPEPCPPPKCPEPCPE). Residues 57–85 (PCPPPSCQQKCPPAQPPPPCQQKCPPKSK) are disordered.

This sequence belongs to the cornifin (SPRR) family. In terms of tissue distribution, expressed in uterus.

The protein localises to the cytoplasm. Functionally, cross-linked envelope protein of keratinocytes. It is a keratinocyte protein that first appears in the cell cytosol, but ultimately becomes cross-linked to membrane proteins by transglutaminase. All that results in the formation of an insoluble envelope beneath the plasma membrane. The protein is Small proline-rich protein 2D (Sprr2d) of Mus musculus (Mouse).